The chain runs to 177 residues: Large ribosomal subunit protein uL6 (177 aa).

Belongs to the universal ribosomal protein uL6 family. In terms of assembly, part of the 50S ribosomal subunit.

Functionally, this protein binds to the 23S rRNA, and is important in its secondary structure. It is located near the subunit interface in the base of the L7/L12 stalk, and near the tRNA binding site of the peptidyltransferase center. This Natronomonas pharaonis (strain ATCC 35678 / DSM 2160 / CIP 103997 / JCM 8858 / NBRC 14720 / NCIMB 2260 / Gabara) (Halobacterium pharaonis) protein is Large ribosomal subunit protein uL6.